The following is a 303-amino-acid chain: DCN1-like protein 3 (303 aa).

Positions 1–40 are disordered; that stretch reads MGQCVTKCKNPSSTLGSKNGERESSKPHKRSSSHKEEHMS. Glycine 2 carries the N-myristoyl glycine lipid modification. Residues 85 to 277 enclose the DCUN1 domain; it reads SSLQRIEELF…LFDTFVEWEM (193 aa).

In terms of assembly, may interact (via the DCUN1 domain) with unneddylated cullins.

It localises to the cell membrane. The protein localises to the cytoplasm. The protein resides in the nucleus. It is found in the perinuclear region. Its function is as follows. Contributes to the neddylation of all cullins by transferring NEDD8 from N-terminally acetylated NEDD8-conjugating E2s enzyme to different cullin C-terminal domain-RBX complexes. At the cell membrane, can promote and as well inhibit cullins neddylation. In Xenopus laevis (African clawed frog), this protein is DCN1-like protein 3.